The chain runs to 251 residues: MSLLLENLIEEDTIFFAGSISEYDDLQMVIAGAKSKFPRSMLSIFNIVPRTMSKYELELIHNENITGAMFTTMYNIRNNLGLGDDKLTIEAIENYFLDPNNEVMPLIINNTDMTAVIPKKSGRRKNKNMVIFRQGSSPILCIFETRKKINIYKENMESASTEYTPIGDNKALISKYAGINVLNVYSPSTSMRLNAIYGFTNKNKLEKLSTNKELESYSSSPLQEPIRLNDFLGLLECVKKNIPLTDIPTKD.

Residues 1-32 (MSLLLENLIEEDTIFFAGSISEYDDLQMVIAG) constitute a propeptide, removed by core protease OPG083/I7.

It belongs to the orthopoxvirus OPG098 family. In terms of processing, undergoes morphogenesis-associated proteolysis which cleaves the 28 kDa to a 25-kDa product. Proteolytic cleavage of major core proteins P4a (OPG136), P4b (OPG129), and VP8 (OPG098), which occurs at a late stage of core formation, is required for production of infectious mature virions (MV).

It is found in the virion. It localises to the host cytoplasm. Major core structural protein. In Vaccinia virus (strain Copenhagen) (VACV), this protein is Core protein VP8 (OPG098).